Here is a 280-residue protein sequence, read N- to C-terminus: Small ribosomal subunit protein uS3 (280 aa).

The KH type-2 domain occupies Ile-38–Lys-106. The tract at residues Ala-216–Ser-280 is disordered. The segment covering Ser-237–Pro-270 has biased composition (low complexity).

This sequence belongs to the universal ribosomal protein uS3 family. Part of the 30S ribosomal subunit. Forms a tight complex with proteins S10 and S14.

Functionally, binds the lower part of the 30S subunit head. Binds mRNA in the 70S ribosome, positioning it for translation. The polypeptide is Small ribosomal subunit protein uS3 (Mycolicibacterium vanbaalenii (strain DSM 7251 / JCM 13017 / BCRC 16820 / KCTC 9966 / NRRL B-24157 / PYR-1) (Mycobacterium vanbaalenii)).